Reading from the N-terminus, the 273-residue chain is Proteasome subunit beta type-10 (273 aa).

Methionine 1 carries the N-acetylmethionine modification. Residues 1–39 (MQKTVLEPQRGFSFENCERNAALQRALPGLRVPHARKTG) constitute a propeptide, removed in mature form. Threonine 40 functions as the Nucleophile in the catalytic mechanism. A Phosphoserine modification is found at serine 230.

Belongs to the peptidase T1B family. As to quaternary structure, the 26S proteasome consists of a 20S proteasome core and two 19S regulatory subunits. The 20S proteasome core is composed of 28 subunits that are arranged in four stacked rings, resulting in a barrel-shaped structure. The two end rings are each formed by seven alpha subunits, and the two central rings are each formed by seven beta subunits. The catalytic chamber with the active sites is on the inside of the barrel. Component of the immunoproteasome, where it displaces the equivalent housekeeping subunit PSMB7. Component of the spermatoproteasome, a form of the proteasome specifically found in testis. Autocleaved. The resulting N-terminal Thr residue of the mature subunit is responsible for the nucleophile proteolytic activity.

Its subcellular location is the cytoplasm. It is found in the nucleus. The catalysed reaction is Cleavage of peptide bonds with very broad specificity.. In terms of biological role, the proteasome is a multicatalytic proteinase complex which is characterized by its ability to cleave peptides with Arg, Phe, Tyr, Leu, and Glu adjacent to the leaving group at neutral or slightly basic pH. The proteasome has an ATP-dependent proteolytic activity. This subunit is involved in antigen processing to generate class I binding peptides. The chain is Proteasome subunit beta type-10 (PSMB10) from Bos taurus (Bovine).